A 1384-amino-acid chain; its full sequence is Hepatocyte growth factor receptor (1384 aa).

Positions 1–24 (MKAPAVLAPGILVLLFTFVQKSNG) are cleaved as a signal peptide. Residues 25 to 933 (ECKEALVKSR…VIVQPDQNFT (909 aa)) are Extracellular-facing. Positions 27-516 (KEALVKSRMN…TGKKITKIPL (490 aa)) constitute a Sema domain. The N-linked (GlcNAc...) asparagine glycan is linked to N45. Intrachain disulfides connect C95–C101, C98–C160, C133–C141, and C173–C176. N106 is a glycosylation site (N-linked (GlcNAc...) asparagine). Residue N149 is glycosylated (N-linked (GlcNAc...) asparagine). N-linked (GlcNAc...) asparagine glycosylation is found at N203 and N359. Intrachain disulfides connect C299/C364 and C386/C398. N-linked (GlcNAc...) asparagine glycans are attached at residues N400 and N406. Cystine bridges form between C521–C539, C527–C562, C530–C546, and C542–C552. IPT/TIG domains lie at 564–656 (PTIY…FSYV), 658–740 (PIIT…FIYR), and 743–837 (PIVY…LIYV). A glycan (O-linked (Man) threonine) is linked at T583. N-linked (GlcNAc...) asparagine glycans are attached at residues N608 and N636. O-linked (Man) threonine glycans are attached at residues T677 and T762. N-linked (GlcNAc...) asparagine glycosylation is found at N786, N880, and N931. A helical membrane pass occupies residues 934-956 (GLIVGVVSVSIILLLLLGLFLWL). The Cytoplasmic portion of the chain corresponds to 957–1384 (KKRKQIKDLG…NVSGEDDDDT (428 aa)). The residue at position 967 (S967) is a Phosphoserine. The residue at position 978 (T978) is a Phosphothreonine. S991, S998, and S1001 each carry phosphoserine. Y1004 carries the phosphotyrosine modification. One can recognise a Protein kinase domain in the interval 1079–1346 (VHFNEVIGRG…RIAAIFSAFI (268 aa)). Residues 1085-1093 (IGRGHFGCV) and K1111 contribute to the ATP site. D1205 acts as the Proton acceptor in catalysis. The tract at residues 1213–1382 (LDEKFTVKVA…QENVSGEDDD (170 aa)) is interaction with RANBP9. Y1231 is subject to Phosphotyrosine. Phosphotyrosine; by autocatalysis is present on residues Y1235 and Y1236. Residue T1290 is modified to Phosphothreonine. Residues 1321–1360 (WHPKAELRPSFSELVSRIAAIFSAFIGEHYVHVNATYVNV) form an interaction with MUC20 region. Y1350 and Y1357 each carry phosphotyrosine; by autocatalysis. Phosphotyrosine is present on Y1366.

The protein belongs to the protein kinase superfamily. Tyr protein kinase family. In terms of assembly, heterodimer made of an alpha chain (50 kDa) and a beta chain (145 kDa) which are disulfide linked. Binds PLXNB1. Interacts when phosphorylated with downstream effectors including STAT3, PIK3R1, SRC, PCLG1, GRB2 and GAB1. Interacts with SPSB1, SPSB2 and SPSB4. Interacts with INPP5D/SHIP1. When phosphorylated at Tyr-1357, interacts with INPPL1/SHIP2. Interacts with RANBP9 and RANBP10, as well as SPSB1, SPSB2, SPSB3 and SPSB4. SPSB1 binding occurs in the presence and in the absence of HGF, however HGF treatment has a positive effect on this interaction. Interacts with MUC20; prevents interaction with GRB2 and suppresses hepatocyte growth factor-induced cell proliferation. Interacts with GRB10. Interacts with PTPN1 and PTPN2. Interacts with HSP90AA1 and HSP90AB1; the interaction suppresses MET kinase activity. Interacts with tensin TNS3. Interacts (when phosphorylated) with tensin TNS4 (via SH2 domain); the interaction increases MET protein stability by inhibiting MET endocytosis and subsequent lysosomal degradation. In terms of processing, autophosphorylated in response to ligand binding on Tyr-1235 and Tyr-1236 in the kinase domain leading to further phosphorylation of Tyr-1350 and Tyr-1357 in the C-terminal multifunctional docking site. Dephosphorylated by PTPRJ at Tyr-1350 and Tyr-1366. Dephosphorylated by PTPN1 and PTPN2. Ubiquitinated. Ubiquitination by CBL regulates the receptor stability and activity through proteasomal degradation. Post-translationally, O-mannosylation of IPT/TIG domains by TMEM260 is required for protein maturation. O-mannosylated residues are composed of single mannose glycans that are not elongated or modified.

The protein resides in the membrane. It catalyses the reaction L-tyrosyl-[protein] + ATP = O-phospho-L-tyrosyl-[protein] + ADP + H(+). Its activity is regulated as follows. In its inactive state, the C-terminal tail interacts with the catalytic domain and inhibits the kinase activity. Upon ligand binding, the C-terminal tail is displaced and becomes phosphorylated, thus increasing the kinase activity. Receptor tyrosine kinase that transduces signals from the extracellular matrix into the cytoplasm by binding to hepatocyte growth factor/HGF ligand. Regulates many physiological processes including proliferation, scattering, morphogenesis and survival. Ligand binding at the cell surface induces autophosphorylation of MET on its intracellular domain that provides docking sites for downstream signaling molecules. Following activation by ligand, interacts with the PI3-kinase subunit PIK3R1, PLCG1, SRC, GRB2, STAT3 or the adapter GAB1. Recruitment of these downstream effectors by MET leads to the activation of several signaling cascades including the RAS-ERK, PI3 kinase-AKT, or PLCgamma-PKC. The RAS-ERK activation is associated with the morphogenetic effects while PI3K/AKT coordinates prosurvival effects. During embryonic development, MET signaling plays a role in gastrulation, development and migration of muscles and neuronal precursors, angiogenesis and kidney formation. In adults, participates in wound healing as well as organ regeneration and tissue remodeling. Also promotes differentiation and proliferation of hematopoietic cells. This Ovis aries (Sheep) protein is Hepatocyte growth factor receptor (MET).